Consider the following 178-residue polypeptide: uncharacterized protein (178 aa).

The segment at M1 to L89 is disordered. Basic and acidic residues-rich tracts occupy residues P44–V53 and A61–L89.

This is an uncharacterized protein from Schizosaccharomyces pombe (strain 972 / ATCC 24843) (Fission yeast).